The chain runs to 259 residues: Protein TILLER ANGLE CONTROL 1 (259 aa).

The IGT motif motif lies at 56–62 (GILAIGT). Disordered regions lie at residues 96–123 (EEKAEAKQDTPVTAPSEPASALEPAKMH), 206–226 (SCMEKMHHKKPTKPTSKPLKA), and 239–259 (GKKIHPEQLNGRSNAEGPVTA). Residues 109-119 (APSEPASALEP) show a composition bias toward low complexity.

This sequence belongs to the TAC family. Expressed in the basal part of seedlings.

Involved in the regulation of tiller growth angle. Promotes horizontal shoot growth. TAC1 and LAZY1 play opposite functions in the regulation of tiller growth angle. In Oryza sativa subsp. indica (Rice), this protein is Protein TILLER ANGLE CONTROL 1.